The primary structure comprises 343 residues: tRNA-specific 2-thiouridylase MnmA 2 (343 aa).

ATP-binding positions include 7–14 and L33; that span reads GMSGGVDS. The active-site Nucleophile is the C91. C91 and C189 are joined by a disulfide. G115 provides a ligand contact to ATP. Residues 139-141 form an interaction with tRNA region; the sequence is KDQ. The active-site Cysteine persulfide intermediate is C189.

The protein belongs to the MnmA/TRMU family.

The protein localises to the cytoplasm. The enzyme catalyses S-sulfanyl-L-cysteinyl-[protein] + uridine(34) in tRNA + AH2 + ATP = 2-thiouridine(34) in tRNA + L-cysteinyl-[protein] + A + AMP + diphosphate + H(+). In terms of biological role, catalyzes the 2-thiolation of uridine at the wobble position (U34) of tRNA, leading to the formation of s(2)U34. The polypeptide is tRNA-specific 2-thiouridylase MnmA 2 (Fusobacterium nucleatum subsp. nucleatum (strain ATCC 25586 / DSM 15643 / BCRC 10681 / CIP 101130 / JCM 8532 / KCTC 2640 / LMG 13131 / VPI 4355)).